Reading from the N-terminus, the 307-residue chain is Methionyl-tRNA formyltransferase (307 aa).

Residue Ser109–Pro112 coordinates (6S)-5,6,7,8-tetrahydrofolate.

The protein belongs to the Fmt family.

The enzyme catalyses L-methionyl-tRNA(fMet) + (6R)-10-formyltetrahydrofolate = N-formyl-L-methionyl-tRNA(fMet) + (6S)-5,6,7,8-tetrahydrofolate + H(+). Functionally, attaches a formyl group to the free amino group of methionyl-tRNA(fMet). The formyl group appears to play a dual role in the initiator identity of N-formylmethionyl-tRNA by promoting its recognition by IF2 and preventing the misappropriation of this tRNA by the elongation apparatus. This is Methionyl-tRNA formyltransferase from Mycobacteroides abscessus (strain ATCC 19977 / DSM 44196 / CCUG 20993 / CIP 104536 / JCM 13569 / NCTC 13031 / TMC 1543 / L948) (Mycobacterium abscessus).